A 337-amino-acid chain; its full sequence is tRNA N6-adenosine threonylcarbamoyltransferase (337 aa).

Residues His-111 and His-115 each coordinate Fe cation. Residues 134-138 (LVSGG), Asp-167, Gly-180, and Asn-272 each bind substrate. Asp-300 contributes to the Fe cation binding site.

The protein belongs to the KAE1 / TsaD family. It depends on Fe(2+) as a cofactor.

It localises to the cytoplasm. It catalyses the reaction L-threonylcarbamoyladenylate + adenosine(37) in tRNA = N(6)-L-threonylcarbamoyladenosine(37) in tRNA + AMP + H(+). In terms of biological role, required for the formation of a threonylcarbamoyl group on adenosine at position 37 (t(6)A37) in tRNAs that read codons beginning with adenine. Is involved in the transfer of the threonylcarbamoyl moiety of threonylcarbamoyl-AMP (TC-AMP) to the N6 group of A37, together with TsaE and TsaB. TsaD likely plays a direct catalytic role in this reaction. The polypeptide is tRNA N6-adenosine threonylcarbamoyltransferase (Salmonella newport (strain SL254)).